Here is a 296-residue protein sequence, read N- to C-terminus: MSITSIINNLIDIITLYIRIFYVIYYIAIKSKNQICIANILYTSIKFYYTDIIDAVLKRGIDPNIPFPLSENSYVNPLIYAIECDNHDAILSLIRYGADVNTYSNYLVITPLYISVLHGCPKCVEILLYYGANINIVTYKMVTPIELASRICYNNLAFMVCDRTITNIPKKITYNFEIMKILVSHFILQASNDRLNNRHNKYFSEGYNKNKMLVSTSIILTYFKKQCIEDIDIMKNIKLGDDSFLDILVERNTMKLSTYISNQDILDIPKTVKVYNTRINMLLDEAIIYNNINIIL.

2 ANK repeats span residues 73-102 (SYVN…DVNT) and 107-136 (LVIT…NINI).

The chain is Putative ankyrin repeat protein FPV216 from Fowlpox virus (strain NVSL) (FPV).